Here is a 215-residue protein sequence, read N- to C-terminus: Adenylate kinase (215 aa).

10–15 (GCGKGT) contacts ATP. The interval 30-59 (STGDIFRQTIDQKGPYWEELKSYISKGLLV) is NMP. Residues Thr-31, Arg-36, 57 to 59 (LLV), and Gln-91 contribute to the AMP site. An LID region spans residues 120 to 157 (GRRICSKCKRIYNIHYSAPKKEDICDDDGEFLIQRKDD). Arg-121 serves as a coordination point for ATP. 2 residues coordinate Zn(2+): Cys-124 and Cys-127. ATP is bound at residue 130-131 (IY). Zn(2+)-binding residues include Cys-144 and Asp-147. Residues Arg-154 and Arg-165 each contribute to the AMP site.

The protein belongs to the adenylate kinase family. Monomer.

Its subcellular location is the cytoplasm. The enzyme catalyses AMP + ATP = 2 ADP. Its pathway is purine metabolism; AMP biosynthesis via salvage pathway; AMP from ADP: step 1/1. Catalyzes the reversible transfer of the terminal phosphate group between ATP and AMP. Plays an important role in cellular energy homeostasis and in adenine nucleotide metabolism. The sequence is that of Adenylate kinase from Malacoplasma penetrans (strain HF-2) (Mycoplasma penetrans).